Here is a 339-residue protein sequence, read N- to C-terminus: DNA-directed RNA polymerase subunit alpha (339 aa).

Residues 1-235 are alpha N-terminal domain (alpha-NTD); it reads MTIQKNWQEL…DQLNVFVNFE (235 aa). The tract at residues 251-339 is alpha C-terminal domain (alpha-CTD); it reads FNPAFLKKVD…ELAKRFEDHY (89 aa).

Belongs to the RNA polymerase alpha chain family. As to quaternary structure, homodimer. The RNAP catalytic core consists of 2 alpha, 1 beta, 1 beta' and 1 omega subunit. When a sigma factor is associated with the core the holoenzyme is formed, which can initiate transcription.

It catalyses the reaction RNA(n) + a ribonucleoside 5'-triphosphate = RNA(n+1) + diphosphate. In terms of biological role, DNA-dependent RNA polymerase catalyzes the transcription of DNA into RNA using the four ribonucleoside triphosphates as substrates. This is DNA-directed RNA polymerase subunit alpha from Afipia carboxidovorans (strain ATCC 49405 / DSM 1227 / KCTC 32145 / OM5) (Oligotropha carboxidovorans).